Consider the following 635-residue polypeptide: Threonine--tRNA ligase (635 aa).

The TGS domain occupies 1–62 (MITITLPDGS…EHDAILRIIT (62 aa)). The catalytic stretch occupies residues 244 to 535 (DHRKIGKAQD…LIEHYAGIWP (292 aa)). Residues Cys335, His386, and His512 each coordinate Zn(2+).

This sequence belongs to the class-II aminoacyl-tRNA synthetase family. In terms of assembly, homodimer. The cofactor is Zn(2+).

Its subcellular location is the cytoplasm. It carries out the reaction tRNA(Thr) + L-threonine + ATP = L-threonyl-tRNA(Thr) + AMP + diphosphate + H(+). Catalyzes the attachment of threonine to tRNA(Thr) in a two-step reaction: L-threonine is first activated by ATP to form Thr-AMP and then transferred to the acceptor end of tRNA(Thr). Also edits incorrectly charged L-seryl-tRNA(Thr). The protein is Threonine--tRNA ligase of Xylella fastidiosa (strain M23).